The following is a 130-amino-acid chain: Histidine triad nucleotide-binding protein 1 (130 aa).

The 109-residue stretch at 22-130 folds into the HIT domain; the sequence is LFGKIIRKEI…GGRQLQWPPG (109 aa). The short motif at 114–118 is the Histidine triad motif element; it reads HLHLH.

This Caenorhabditis elegans protein is Histidine triad nucleotide-binding protein 1 (hint-1).